A 149-amino-acid chain; its full sequence is MRCPFCDTEETKVIDSRLVSDGYQVRRRRECGHCHERFTTFEMAELIIPKIIKTDGTREPFNEDKLRSGIQHALEKRPVSADDVEKAINHIILQLRATGEREVPSKLVGKLAMNELKKLDKVAYIRFASVYLSFDDIDQFTIEIEKLKD.

The segment at 3 to 34 (CPFCDTEETKVIDSRLVSDGYQVRRRRECGHC) is a zinc-finger region. Positions 49–139 (PKIIKTDGTR…VYLSFDDIDQ (91 aa)) constitute an ATP-cone domain.

It belongs to the NrdR family. It depends on Zn(2+) as a cofactor.

Negatively regulates transcription of bacterial ribonucleotide reductase nrd genes and operons by binding to NrdR-boxes. This chain is Transcriptional repressor NrdR, found in Haemophilus influenzae (strain PittEE).